We begin with the raw amino-acid sequence, 167 residues long: Probable host range protein 2 (167 aa).

The protein belongs to the poxviridae C7 protein family.

In terms of biological role, plays a role for multiplication of the virus in different cell types. In Yaba monkey tumor virus (strain VR587) (YMTV), this protein is Probable host range protein 2.